The sequence spans 209 residues: Large ribosomal subunit protein uL3 (209 aa).

Residues 127-166 (NFGGGSRTHGQSDRLRAPGSVGGSSDPSRTFKGTRMAGRM) are disordered.

This sequence belongs to the universal ribosomal protein uL3 family. As to quaternary structure, part of the 50S ribosomal subunit. Forms a cluster with proteins L14 and L19.

In terms of biological role, one of the primary rRNA binding proteins, it binds directly near the 3'-end of the 23S rRNA, where it nucleates assembly of the 50S subunit. The polypeptide is Large ribosomal subunit protein uL3 (Chlorobaculum tepidum (strain ATCC 49652 / DSM 12025 / NBRC 103806 / TLS) (Chlorobium tepidum)).